The sequence spans 213 residues: uncharacterized protein (213 aa).

Residues 22–42 (WFGLSMVSIAVIFGPLTGAHV) form a helical membrane-spanning segment. An NPA 1 motif is present at residues 43-45 (NPA). The next 3 helical transmembrane spans lie at 63-83 (VYIIAQCIGAFIVALIVWLLF), 112-132 (NLLSEIVTTFSLLFILFTLNH), and 138-158 (GVAMFFVFTGVAGGVMSFGGL). The short motif at 164-166 (NPA) is the NPA 2 element. Residues 188–208 (FDYAWVPVLRPVIGAILAAWL) traverse the membrane as a helical segment.

It belongs to the MIP/aquaporin (TC 1.A.8) family.

The protein resides in the cell membrane. This is an uncharacterized protein from Haemophilus influenzae (strain ATCC 51907 / DSM 11121 / KW20 / Rd).